Here is a 445-residue protein sequence, read N- to C-terminus: 3-phosphoshikimate 1-carboxyvinyltransferase (445 aa).

3-phosphoshikimate is bound by residues Lys-28, Ser-29, and Arg-33. Lys-28 lines the phosphoenolpyruvate pocket. Residues Gly-101 and Arg-129 each coordinate phosphoenolpyruvate. 3-phosphoshikimate-binding residues include Ser-175, Gln-177, Asp-328, and Lys-355. Gln-177 is a binding site for phosphoenolpyruvate. Asp-328 acts as the Proton acceptor in catalysis. Positions 359 and 402 each coordinate phosphoenolpyruvate.

This sequence belongs to the EPSP synthase family. As to quaternary structure, monomer.

The protein resides in the cytoplasm. It catalyses the reaction 3-phosphoshikimate + phosphoenolpyruvate = 5-O-(1-carboxyvinyl)-3-phosphoshikimate + phosphate. It participates in metabolic intermediate biosynthesis; chorismate biosynthesis; chorismate from D-erythrose 4-phosphate and phosphoenolpyruvate: step 6/7. Functionally, catalyzes the transfer of the enolpyruvyl moiety of phosphoenolpyruvate (PEP) to the 5-hydroxyl of shikimate-3-phosphate (S3P) to produce enolpyruvyl shikimate-3-phosphate and inorganic phosphate. This is 3-phosphoshikimate 1-carboxyvinyltransferase from Rhodopseudomonas palustris (strain HaA2).